The following is a 29-amino-acid chain: Mycofactocin precursor peptide (29 aa).

Belongs to the mycofactocin precursor peptide family. The post-translational modifications that lead to mycofactocin involve oxidative decarboxylation of the C-terminal tyrosine residue catalyzed by MftC, introduction of a tyramine-valine cross-link, removal of the modified C-terminal dipeptide by MftE. The released dipeptide then undergoes oxidative deamination by MftD, glycosylation by MftF and methylation by an unknown enzyme.

In terms of biological role, precursor peptide that leads to mycofactocin (MFT) after extensive post-translational modifications by enzymes encoded by adjacent genes. Mycofactocin acts as a redox cofactor of nicotinamide-dependent oxidoreductases encoded in the same locus. This chain is Mycofactocin precursor peptide, found in Mycobacterium tuberculosis (strain ATCC 25618 / H37Rv).